Reading from the N-terminus, the 45-residue chain is Thymosin beta-15A homolog (45 aa).

The interval 19-45 (KKTNTEEKNTLPSKETIEQEKECVKSS) is disordered. Basic and acidic residues predominate over residues 21–45 (TNTEEKNTLPSKETIEQEKECVKSS).

Belongs to the thymosin beta family.

The protein resides in the cytoplasm. The protein localises to the cytoskeleton. Its function is as follows. Plays an important role in the organization of the cytoskeleton. Binds to and sequesters actin monomers (G actin) and therefore inhibits actin polymerization. The sequence is that of Thymosin beta-15A homolog from Coturnix japonica (Japanese quail).